The sequence spans 312 residues: Ribosomal protein L11 methyltransferase (312 aa).

Residues T162, G183, D205, and N248 each contribute to the S-adenosyl-L-methionine site.

Belongs to the methyltransferase superfamily. PrmA family.

It localises to the cytoplasm. The catalysed reaction is L-lysyl-[protein] + 3 S-adenosyl-L-methionine = N(6),N(6),N(6)-trimethyl-L-lysyl-[protein] + 3 S-adenosyl-L-homocysteine + 3 H(+). Its function is as follows. Methylates ribosomal protein L11. The polypeptide is Ribosomal protein L11 methyltransferase (Bacillus anthracis (strain A0248)).